The primary structure comprises 398 residues: Thyrotropin-releasing hormone receptor (398 aa).

The Extracellular segment spans residues 1-28 (MENETGSELNQTQLQPRAVVALEYQVVT). 2 N-linked (GlcNAc...) asparagine glycosylation sites follow: asparagine 3 and asparagine 10. Residues 29-51 (ILLVLIICGLGIVGNIMVVLVVM) form a helical membrane-spanning segment. Over 52–61 (RTKHMRTPTN) the chain is Cytoplasmic. A helical transmembrane segment spans residues 62-83 (CYLVSLAVADLMVLVAAGLPNI). Residues 84-99 (TDSIYGSWVYGYVGCL) are Extracellular-facing. An intrachain disulfide couples cysteine 98 to cysteine 179. Residues 100–121 (CITYLQYLGINASSCSITAFTI) traverse the membrane as a helical segment. At 122-144 (ERYIAICHPIKAQFLCTFSRAKK) the chain is on the cytoplasmic side. The chain crosses the membrane as a helical span at residues 145–168 (IIIFVWAFTSIYCMLWFFLLDLNI). Over 169–193 (STYKDAIVVSCGYKISRNYYSPIYL) the chain is Extracellular. The chain crosses the membrane as a helical span at residues 194–215 (MDFGVFYVVPMILATVLYGFIA). Residues 216-266 (RILFLSPIPSDPKENSNTWKNDSTHQNKNLNSKTSNRYFNSTVSSRKQVTK) are Cytoplasmic-facing. Residues 267–288 (MLAVVVILFALLWMPYRTLVVV) form a helical membrane-spanning segment. Residues 289 to 296 (NSFLSSPF) lie on the Extracellular side of the membrane. A helical transmembrane segment spans residues 297–319 (QENWFLLFCRICIYLNSAINPVI). Residues 320 to 398 (YNLMSQKFRA…LASEVTFSQS (79 aa)) lie on the Cytoplasmic side of the membrane.

This sequence belongs to the G-protein coupled receptor 1 family.

It is found in the cell membrane. In terms of biological role, receptor for thyrotropin-releasing hormone (TRH). Upon ligand binding, this G-protein-coupled receptor triggers activation of the phosphatidylinositol (IP3)-calcium-protein kinase C (PKC) pathway. In Ovis aries (Sheep), this protein is Thyrotropin-releasing hormone receptor (TRHR).